A 201-amino-acid chain; its full sequence is Holliday junction branch migration complex subunit RuvA (201 aa).

Residues 1 to 63 form a domain I region; the sequence is MIAFVSGTVA…EDSLTLYGFA (63 aa). The domain II stretch occupies residues 64 to 139; the sequence is DDDERQVFEL…RLGEPIGAPA (76 aa). The interval 139 to 143 is flexible linker; that stretch reads AVGAP. The segment at 144–201 is domain III; it reads VSTGWRDQLHAALIGLGYATREADEAVSAVAPQAEAAGGTPQVGALLKAALQTLNRAR.

It belongs to the RuvA family. In terms of assembly, homotetramer. Forms an RuvA(8)-RuvB(12)-Holliday junction (HJ) complex. HJ DNA is sandwiched between 2 RuvA tetramers; dsDNA enters through RuvA and exits via RuvB. An RuvB hexamer assembles on each DNA strand where it exits the tetramer. Each RuvB hexamer is contacted by two RuvA subunits (via domain III) on 2 adjacent RuvB subunits; this complex drives branch migration. In the full resolvosome a probable DNA-RuvA(4)-RuvB(12)-RuvC(2) complex forms which resolves the HJ.

Its subcellular location is the cytoplasm. Functionally, the RuvA-RuvB-RuvC complex processes Holliday junction (HJ) DNA during genetic recombination and DNA repair, while the RuvA-RuvB complex plays an important role in the rescue of blocked DNA replication forks via replication fork reversal (RFR). RuvA specifically binds to HJ cruciform DNA, conferring on it an open structure. The RuvB hexamer acts as an ATP-dependent pump, pulling dsDNA into and through the RuvAB complex. HJ branch migration allows RuvC to scan DNA until it finds its consensus sequence, where it cleaves and resolves the cruciform DNA. In Streptomyces coelicolor (strain ATCC BAA-471 / A3(2) / M145), this protein is Holliday junction branch migration complex subunit RuvA.